A 199-amino-acid polypeptide reads, in one-letter code: Recombination protein RecR (199 aa).

The C4-type zinc finger occupies 57–72 (CERCNNLSEAPLCAVC). A Toprim domain is found at 80–174 (SILCVVESPA…TISRIARGVP (95 aa)).

Belongs to the RecR family.

Its function is as follows. May play a role in DNA repair. It seems to be involved in an RecBC-independent recombinational process of DNA repair. It may act with RecF and RecO. This is Recombination protein RecR from Acidithiobacillus ferrooxidans (strain ATCC 23270 / DSM 14882 / CIP 104768 / NCIMB 8455) (Ferrobacillus ferrooxidans (strain ATCC 23270)).